The chain runs to 200 residues: MKKIVLATGNQGKVREMADLLSDFGFDVVAQSEFNVPEAAETGTTFIENAIIKARHAAQITGLPTIADDSGLEVDYLNGAPGIYSARYAGEHASDGDNLNKLLMAMQDVPDDQRSARFHCVLVLMRHADDPTPIVCHGKWEGKILTAPHGSNGFGYDPIFWVPEENCASAELEPVRKKQLSHRGKALQKLFKAIEEQRTC.

8–13 (TGNQGK) is a substrate binding site. D69 acts as the Proton acceptor in catalysis. D69 is a Mg(2+) binding site. Substrate-binding positions include S70, 154-157 (FGYD), K177, and 182-183 (HR).

This sequence belongs to the HAM1 NTPase family. In terms of assembly, homodimer. It depends on Mg(2+) as a cofactor.

It carries out the reaction XTP + H2O = XMP + diphosphate + H(+). It catalyses the reaction dITP + H2O = dIMP + diphosphate + H(+). The enzyme catalyses ITP + H2O = IMP + diphosphate + H(+). Functionally, pyrophosphatase that catalyzes the hydrolysis of nucleoside triphosphates to their monophosphate derivatives, with a high preference for the non-canonical purine nucleotides XTP (xanthosine triphosphate), dITP (deoxyinosine triphosphate) and ITP. Seems to function as a house-cleaning enzyme that removes non-canonical purine nucleotides from the nucleotide pool, thus preventing their incorporation into DNA/RNA and avoiding chromosomal lesions. The sequence is that of dITP/XTP pyrophosphatase from Vibrio cholerae serotype O1 (strain ATCC 39315 / El Tor Inaba N16961).